A 354-amino-acid polypeptide reads, in one-letter code: Uroporphyrinogen decarboxylase (354 aa).

Substrate contacts are provided by residues 27–31 (RQAGR), Asp77, Tyr154, Thr209, and His327.

The protein belongs to the uroporphyrinogen decarboxylase family. In terms of assembly, homodimer.

The protein localises to the cytoplasm. It catalyses the reaction uroporphyrinogen III + 4 H(+) = coproporphyrinogen III + 4 CO2. It functions in the pathway porphyrin-containing compound metabolism; protoporphyrin-IX biosynthesis; coproporphyrinogen-III from 5-aminolevulinate: step 4/4. Catalyzes the decarboxylation of four acetate groups of uroporphyrinogen-III to yield coproporphyrinogen-III. The chain is Uroporphyrinogen decarboxylase from Salmonella paratyphi B (strain ATCC BAA-1250 / SPB7).